We begin with the raw amino-acid sequence, 117 residues long: Large ribosomal subunit protein bL17 (117 aa).

The protein belongs to the bacterial ribosomal protein bL17 family. Part of the 50S ribosomal subunit. Contacts protein L32.

The chain is Large ribosomal subunit protein bL17 from Coprothermobacter proteolyticus (strain ATCC 35245 / DSM 5265 / OCM 4 / BT).